Reading from the N-terminus, the 1002-residue chain is Isoleucine--tRNA ligase, mitochondrial (1002 aa).

Residues 94 to 104 (PYANGELHLGH) carry the 'HIGH' region motif. The 'KMSKS' region motif lies at 668-672 (KMSKS). Lysine 671 is a binding site for ATP.

This sequence belongs to the class-I aminoacyl-tRNA synthetase family.

It is found in the mitochondrion matrix. The enzyme catalyses tRNA(Ile) + L-isoleucine + ATP = L-isoleucyl-tRNA(Ile) + AMP + diphosphate. This chain is Isoleucine--tRNA ligase, mitochondrial (ISM1), found in Saccharomyces cerevisiae (strain ATCC 204508 / S288c) (Baker's yeast).